Consider the following 481-residue polypeptide: Protein FAM83E (481 aa).

The interval 1 to 296 is DUF1669; the sequence is MAASQLAALE…LYAASRPLSA (296 aa). The tract at residues 351-481 is disordered; the sequence is KQETPTTTGP…ASGSGSGRRR (131 aa). Over residues 371 to 385 the composition is skewed to low complexity; that stretch reads RTRTTSGPPTRPSRS. Polar residues-rich tracts occupy residues 391–400 and 465–474; these read RLSQLSGSSD and NATTSDWASG.

This sequence belongs to the FAM83 family. In terms of assembly, directly interacts (via DUF1669) with CSNK1A1, CSNK1A1L, CSNK1D and CSNK1E. May interact with RAF1.

It is found in the cytoplasm. The protein localises to the perinuclear region. In terms of biological role, may play a role in MAPK signaling. The polypeptide is Protein FAM83E (Mus musculus (Mouse)).